We begin with the raw amino-acid sequence, 324 residues long: Transcriptional regulator protein Pur-beta (324 aa).

Residues 1–47 (MADGDSGSERGGGGGGGGGPGGFQPAPRGGGGGGGGPGGEQETQELA) are disordered. The residue at position 2 (alanine 2) is an N-acetylalanine. Serine 6 and serine 8 each carry phosphoserine. Over residues 9 to 39 (ERGGGGGGGGGPGGFQPAPRGGGGGGGGPGG) the composition is skewed to gly residues. Arginine 28 is modified (omega-N-methylarginine). The segment at 37 to 263 (PGGEQETQEL…GVFLRVSEVK (227 aa)) is DNA-binding. Threonine 43 bears the Phosphothreonine mark. Serine 113 carries the phosphoserine modification. At arginine 164 the chain carries Omega-N-methylarginine. Residue lysine 279 is modified to N6-acetyllysine. Residues 297–307 (RQRDKLYERRG) show a composition bias toward basic and acidic residues. The disordered stretch occupies residues 297 to 324 (RQRDKLYERRGGGSGGGDESEGEEVDED). Arginine 306 is modified (omega-N-methylarginine). Residues serine 310 and serine 316 each carry the phosphoserine modification. Residues 314-324 (DESEGEEVDED) are compositionally biased toward acidic residues.

Belongs to the PUR DNA-binding protein family. In terms of assembly, homodimer, heterodimer with PURA and heterotrimer with PURA and YBX1/Y-box protein 1. Interacts with MYOCD and SRF.

Its subcellular location is the nucleus. Transcriptional regulator which can act as an activator or a repressor. Represses the transcription of ACTA2 in fibroblasts and smooth muscle cells via its ability to interact with the purine-rich strand of a MCAT-containing element in the 5' flanking region of the gene. Represses the transcription of MYOCD, capable of repressing all isoforms of MYOCD but the magnitude of the repressive effects is most notable for the SMC-specific isoforms. Promotes hepatic glucose production by activating the transcription of ADCY6, leading to cAMP accumulation, increased PKA activity, CREB activation, and increased transcription of PCK1 and G6PC genes. Has capacity to bind repeated elements in single-stranded DNA such as the purine-rich single strand of the PUR element located upstream of the MYC gene. Participates in transcriptional and translational regulation of alpha-MHC expression in cardiac myocytes by binding to the purine-rich negative regulatory (PNR) element. Modulates constitutive liver galectin-3 gene transcription by binding to its promoter. May play a role in the dendritic transport of a subset of mRNAs. This is Transcriptional regulator protein Pur-beta (Purb) from Mus musculus (Mouse).